Here is a 251-residue protein sequence, read N- to C-terminus: Ubiquinone/menaquinone biosynthesis C-methyltransferase UbiE (251 aa).

S-adenosyl-L-methionine contacts are provided by residues Thr-74, Asp-95, 123–124 (NA), and Ser-140.

Belongs to the class I-like SAM-binding methyltransferase superfamily. MenG/UbiE family.

It catalyses the reaction a 2-demethylmenaquinol + S-adenosyl-L-methionine = a menaquinol + S-adenosyl-L-homocysteine + H(+). The enzyme catalyses a 2-methoxy-6-(all-trans-polyprenyl)benzene-1,4-diol + S-adenosyl-L-methionine = a 5-methoxy-2-methyl-3-(all-trans-polyprenyl)benzene-1,4-diol + S-adenosyl-L-homocysteine + H(+). It participates in quinol/quinone metabolism; menaquinone biosynthesis; menaquinol from 1,4-dihydroxy-2-naphthoate: step 2/2. It functions in the pathway cofactor biosynthesis; ubiquinone biosynthesis. Its function is as follows. Methyltransferase required for the conversion of demethylmenaquinol (DMKH2) to menaquinol (MKH2) and the conversion of 2-polyprenyl-6-methoxy-1,4-benzoquinol (DDMQH2) to 2-polyprenyl-3-methyl-6-methoxy-1,4-benzoquinol (DMQH2). The polypeptide is Ubiquinone/menaquinone biosynthesis C-methyltransferase UbiE (Escherichia fergusonii (strain ATCC 35469 / DSM 13698 / CCUG 18766 / IAM 14443 / JCM 21226 / LMG 7866 / NBRC 102419 / NCTC 12128 / CDC 0568-73)).